The chain runs to 1196 residues: MRSEAQVPPAQKVYYEELFQIADVDKDGVIGLNDASFFRNSMLSNDILRDIWQLSDVNNGYLNIDDFFVALKLVSLAQMGAPVTLDSIKLIPVIPPPKLNDIPPLKNDWIISNGEKQNYIDLFNKYDEDGDGFILGSQAKTIFGTSGLPTKMLSHIWNLSDVSKDQKLDCQEFIMATFLIRSVLKGYELPNKLPESLITSSHYISSAGVPSPKIPEWLIPPPERIIYEDLFNKNQQGGIFTGSQAKVLFEKSGLSNQDLKLIWDLADHNQEQVLDKHKFVIAMFLISQRKKGKELPQSLPQLLLESSKSTFNPSSITSPPPQSSPQSSQLQQQPPQQQQQTGDSKYNINLNDLVSNTTPIGQPNIQPTTTTTTTPATASGGLNVSGLLSPPPQQQSPSIVGTPPSTITREGSFTFDNSGGGNNLLAKPPRSNSITRMNSFQHQLPQQQQQQVSPQSTISNTSIGSGSSSFLSTNATTSSPPPIPSTSSQPTSSNNSSITSNNNNPISPTSTNITQLFENIEKVKQQVFEQERIRQEEIQVKLNQELQLEAELKQQLAQEQQQLDEVRENVKEEEIKLSSIKADNQSLKEQISTARVDIKSLKSQLEQQSSLLREKSELFDEQNEALSHLNDDLKEKQQELQKNKQQIEQLLSSIESIKQNRTDVKNQISTVTKQLNDSKLELKQLAEEQKQQKQKLAEEQKQLQQLQQQQQQQATSKSLTSVKSDDNITFLSGINTNTTSTNTATSIPTASVSGNDNWDFFNSPPVKSSSSLPTSPFDDDKTFVPTFTTTTTTTNNNNNNNTINTSNGNLTFTSPVKSTVNQLKSSNSSVGGTGGSVSTRKLSGASVSSNNSFNDNTSIDTLNNHFGSDQFSFNSFGSNNLTAPPTTSSSTNKVQSDFFGVGGGNKDPFGGDSNNNPFGEESTSSIRDGGSETLSEAHTLFDKDPLFETNDAFQSSKDPFGQILFSNFTKDSFGGESVSNNSNNSSIISSNTIPSSNFTFNTNSTTTNNRQSPIDSDLFSDNQQQQQQQQQQQQQQQQQQQQQQQPTQSNQNNQSFTSNDSFDDFQTTPTPTNNNNNTTTTEFGVKFSDTTFGDSSNGDFDFGSNVFGQPSANDPFSSSIEPQHQPDTNNVSSDPFKGGFDDFGSAPFSFDNKFNEVVGDDSPSLTTATTTTTNDNDNGTFVFNDNNNNTPSPFDS.

4 EF-hand domains span residues 10–45 (AQKV…MLSN), 46–77 (DILR…VSLA), 114–149 (GEKQ…SGLP), and 254–289 (LSNQ…ISQR). 3 EH domains span residues 11 to 100 (QKVY…PKLN), 115 to 204 (EKQN…SHYI), and 223 to 310 (ERII…SKST). The tract at residues 309–511 (STFNPSSITS…NNNPISPTST (203 aa)) is disordered. Residues 324 to 340 (SPQSSQLQQQPPQQQQQ) show a composition bias toward low complexity. The span at 341 to 356 (TGDSKYNINLNDLVSN) shows a compositional bias: polar residues. Residues 357-378 (TTPIGQPNIQPTTTTTTTPATA) show a composition bias toward low complexity. Polar residues-rich tracts occupy residues 403-417 (PPST…TFDN) and 430-440 (RSNSITRMNSF). Composition is skewed to low complexity over residues 441 to 478 (QHQL…ATTS) and 485 to 511 (STSS…PTST). A coiled-coil region spans residues 512–718 (NITQLFENIE…QQQQQATSKS (207 aa)). Disordered regions lie at residues 733 to 755 (GINT…VSGN), 790 to 810 (TTTT…NGNL), 822 to 852 (QLKS…SNNS), 905 to 932 (NKDP…GGSE), 976 to 1082 (ESVS…TTTE), 1101 to 1133 (DFGS…NVSS), and 1157 to 1196 (VVGD…PFDS). A compositionally biased stretch (low complexity) spans 734-751 (INTNTTSTNTATSIPTAS). The span at 912–932 (DSNNNPFGEESTSSIRDGGSE) shows a compositional bias: polar residues. 2 stretches are compositionally biased toward low complexity: residues 977-1009 (SVSN…TTNN) and 1019-1081 (FSDN…TTTT). A compositionally biased stretch (polar residues) spans 1106–1133 (VFGQPSANDPFSSSIEPQHQPDTNNVSS). Residues 1160-1196 (DDSPSLTTATTTTTNDNDNGTFVFNDNNNNTPSPFDS) show a composition bias toward low complexity.

Interacts with tom1.

The protein resides in the cell membrane. Functionally, may be involved in clathrin-mediated endocytosis. The chain is Epidermal growth factor receptor substrate 15 homolog (eps15) from Dictyostelium discoideum (Social amoeba).